We begin with the raw amino-acid sequence, 182 residues long: Dynactin subunit 5 (182 aa).

At Met-1 the chain carries N-acetylmethionine.

The protein belongs to the dynactin subunits 5/6 family. Dynactin subunit 5 subfamily. Subunit of dynactin, a multiprotein complex part of a tripartite complex with dynein and a adapter, such as BICDL1, BICD2 or HOOK3. The dynactin complex is built around ACTR1A/ACTB filament and consists of an actin-related filament composed of a shoulder domain, a pointed end and a barbed end. Its length is defined by its flexible shoulder domain. The soulder is composed of 2 DCTN1 subunits, 4 DCTN2 and 2 DCTN3. The 4 DCNT2 (via N-terminus) bind the ACTR1A filament and act as molecular rulers to determine the length. The pointed end is important for binding dynein-dynactin cargo adapters. Consists of 4 subunits: ACTR10, DCNT4, DCTN5 and DCTN6. Within the complex DCTN6 forms a heterodimer with DCTN5. The barbed end is composed of a CAPZA1:CAPZB heterodimers, which binds ACTR1A/ACTB filament and dynactin and stabilizes dynactin. Interacts with N4BP2L1.

It is found in the cytoplasm. Its subcellular location is the cytoskeleton. The protein localises to the chromosome. The protein resides in the centromere. It localises to the kinetochore. Part of the dynactin complex that activates the molecular motor dynein for ultra-processive transport along microtubules. The polypeptide is Dynactin subunit 5 (DCTN5) (Pongo abelii (Sumatran orangutan)).